The primary structure comprises 393 residues: MNCGEGIDSRQIDELFINLDPIQAGGRLTTDAMKAVLAYGDGYSVCDHCTKPFRLDHISKPPLAEFHRDLASFLNMDVARLVPGARRGFQAVASAMVKPGDPVLLTAYSHYTEFLSVEQSKGTAFEIPADESHIITPDAAAARIEEVIKTTGKTPALMFIEQVDYQYGNQHPVSDLSKVAHQYDIPVLCNGAYTIGIMDVNGKELGADFLVGSGHKSMAAPAPSGVLATTSEWAEKVFRTTGIKGDLTGRTFGVKEVEMMGCTLMGVTSVGMMASFPHVKRRVKEFDAQVQYVNRIVDALLTIEGTKVQSEYPRKHTLTRMNTTDSFDTVAKTHKKKGFFLTSALRERGIAGILPGSTRVWKFNSYGITSEQADYIAESFIEIAEKEGLVCSR.

Pyridoxal 5'-phosphate-binding positions include 85–86 (AR), Asn-190, and 213–215 (SGH). Lys-216 carries the post-translational modification N6-(pyridoxal phosphate)lysine.

Belongs to the SepCysS family. As to quaternary structure, homodimer. Interacts with SepRS. Pyridoxal 5'-phosphate is required as a cofactor.

The enzyme catalyses O-phospho-L-seryl-tRNA(Cys) + hydrogen sulfide + H(+) = L-cysteinyl-tRNA(Cys) + phosphate. In terms of biological role, converts O-phospho-L-seryl-tRNA(Cys) (Sep-tRNA(Cys)) to L-cysteinyl-tRNA(Cys) (Cys-tRNA(Cys)). This is O-phospho-L-seryl-tRNA:Cys-tRNA synthase 1 from Methanospirillum hungatei JF-1 (strain ATCC 27890 / DSM 864 / NBRC 100397 / JF-1).